Reading from the N-terminus, the 518-residue chain is Filamentous growth regulator 15 (518 aa).

Positions 1 to 41 (MESTLSVSDEKLTNSSTALNNCGDNKESSQVLTTANTTTDN) are enriched in polar residues. Disordered stretches follow at residues 1 to 63 (MEST…SKER), 75 to 101 (VDPN…DHGK), and 261 to 307 (KSRS…KQHR). The span at 42 to 52 (QQVQPKSQHQQ) shows a compositional bias: low complexity. Over residues 77–95 (PNQQSKNTVSDSVQDTTGV) the composition is skewed to polar residues. Positions 262 to 274 (SRSRSKVTKKRKV) are enriched in basic residues. The segment covering 283–298 (SNTATATTSVTTPDAN) has biased composition (low complexity). A C2H2-type zinc finger spans residues 374 to 406 (HECQLPSAEEPHKLCLRRFSRKYELIRHQETVH). The tract at residues 492–518 (RKSSGDDTNYMETSDLESGEEEVTFNK) is disordered. A compositionally biased stretch (acidic residues) spans 505–518 (SDLESGEEEVTFNK).

It is found in the nucleus. Probable transcription factor involved in the regulation of filamentous growth. The polypeptide is Filamentous growth regulator 15 (FGR15) (Candida albicans (strain SC5314 / ATCC MYA-2876) (Yeast)).